The following is a 325-amino-acid chain: Solute-binding protein Bpro_4736 (325 aa).

The signal sequence occupies residues 1 to 27 (MKTRTLKVLKPTLALLLAASFSAGALA). 168–173 (RISPVY) is a phenylglyoxylate binding site.

It belongs to the bacterial solute-binding protein 7 family. In terms of assembly, the complex is comprised of an extracytoplasmic solute-binding protein and a heteromeric permease formed by two transmembrane proteins.

The protein resides in the periplasm. Its function is as follows. Solute-binding protein that binds phenylglyoxylate (in vitro). Probably part of a tripartite ATP-independent periplasmic (TRAP) transport system that mediates solute transport into the cytoplasm. The sequence is that of Solute-binding protein Bpro_4736 from Polaromonas sp. (strain JS666 / ATCC BAA-500).